A 272-amino-acid chain; its full sequence is MARDRRDYYYHQAKEEGYRSRASFKLKQINEKHNVIKRGDSVVDLGAAPGGWLQVAKQLSGGKVLGVDLQRIAPIEGVETIQGDINADSTIKKIIRAVGEKGADVVLCDAAPNLSGNWSYDHARSIELTTSALECAKKILKPKGNFVVKVFQGDMFNDYLEKVRDNFVHVKAYSPQASRSQSAEIYVIGKKFLTAPLRRGDKFVVDIEKLGSGGDGAVLIEGFVVFVKEVEVGEKVRIKIADVKPNFAFADVEERLEKAEDSENLGNSEKAE.

The S-adenosyl-L-methionine site is built by Gly50, Trp52, Asp68, Asp84, and Asp109. Lys149 acts as the Proton acceptor in catalysis. Positions 196–254 (PLRRGDKFVVDIEKLGSGGDGAVLIEGFVVFVKEVEVGEKVRIKIADVKPNFAFADVEE) constitute a TRAM domain.

This sequence belongs to the class I-like SAM-binding methyltransferase superfamily. RNA methyltransferase RlmE family.

The protein localises to the cytoplasm. It carries out the reaction uridine(2552) in 23S rRNA + S-adenosyl-L-methionine = 2'-O-methyluridine(2552) in 23S rRNA + S-adenosyl-L-homocysteine + H(+). Functionally, specifically methylates the uridine in position 2552 of 23S rRNA at the 2'-O position of the ribose in the fully assembled 50S ribosomal subunit. The polypeptide is Ribosomal RNA large subunit methyltransferase E (Methanosarcina acetivorans (strain ATCC 35395 / DSM 2834 / JCM 12185 / C2A)).